A 604-amino-acid chain; its full sequence is Replication protein E1 (604 aa).

The Nuclear localization signal motif lies at K79–K81. Phosphoserine; by host occurs at positions 84 and 92. The interval E144–T307 is DNA-binding region. The SF3 helicase domain occupies L406–L556. An ATP-binding site is contributed by G432–S439. Residue K513 forms a Glycyl lysine isopeptide (Lys-Gly) (interchain with G-Cter in SUMO) linkage.

This sequence belongs to the papillomaviridae E1 protein family. Can form hexamers. Interacts with E2 protein; this interaction increases E1 DNA binding specificity. Interacts with host DNA polymerase subunit POLA2. Interacts with host single stranded DNA-binding protein RPA1. Interacts with host TOP1; this interaction stimulates the enzymatic activity of TOP1. Post-translationally, phosphorylated. In terms of processing, sumoylated.

It localises to the host nucleus. The catalysed reaction is Couples ATP hydrolysis with the unwinding of duplex DNA by translocating in the 3'-5' direction.. The enzyme catalyses ATP + H2O = ADP + phosphate + H(+). In terms of biological role, ATP-dependent DNA 3'-5' helicase required for initiation of viral DNA replication. It forms a complex with the viral E2 protein. The E1-E2 complex binds to the replication origin which contains binding sites for both proteins. During the initial step, a dimer of E1 interacts with a dimer of protein E2 leading to a complex that binds the viral origin of replication with high specificity. Then, a second dimer of E1 displaces the E2 dimer in an ATP-dependent manner to form the E1 tetramer. Following this, two E1 monomers are added to each half of the site, which results in the formation of two E1 trimers on the viral ori. Subsequently, two hexamers will be created. The double hexamer acts as a bi-directional helicase machinery and unwinds the viral DNA and then recruits the host DNA polymerase to start replication. This is Replication protein E1 from Homo sapiens (Human).